The primary structure comprises 203 residues: Na(+)-translocating NADH-quinone reductase subunit E (203 aa).

Helical transmembrane passes span 12 to 32 (AVFVENMALAFFLGMCTFLAL), 36 to 56 (MEAAIGLGIAVVVVLSVTVPV), 82 to 102 (FLGLLTYIGVIAAIVQILEMV), 115 to 135 (GVFLPLITVNCAIMGASLFMV), 145 to 165 (LVYGFGAGLGWALAIIALAGI), and 181 to 201 (LGITFITVGLMSLGFMSFSGI).

The protein belongs to the NqrDE/RnfAE family. Composed of six subunits; NqrA, NqrB, NqrC, NqrD, NqrE and NqrF.

It is found in the cell inner membrane. It carries out the reaction a ubiquinone + n Na(+)(in) + NADH + H(+) = a ubiquinol + n Na(+)(out) + NAD(+). NQR complex catalyzes the reduction of ubiquinone-1 to ubiquinol by two successive reactions, coupled with the transport of Na(+) ions from the cytoplasm to the periplasm. NqrA to NqrE are probably involved in the second step, the conversion of ubisemiquinone to ubiquinol. The sequence is that of Na(+)-translocating NADH-quinone reductase subunit E from Hahella chejuensis (strain KCTC 2396).